Consider the following 138-residue polypeptide: MSAAPLDPRGHGDPDVDGILARASFADDGLLPAVIQQHDTREVLMLGYMDREALRRTLTTGRVTFWSRSRSEYWRKGDTSGHGQYVRDAALDCDGDTVLVQVDQVGVACHTGTRTCFDADHLHPVTGARPAADEGPTP.

A Mg(2+)-binding site is contributed by aspartate 92. Zn(2+) is bound at residue cysteine 93. The Mg(2+) site is built by aspartate 94 and aspartate 96. Zn(2+)-binding residues include cysteine 109 and cysteine 116.

This sequence belongs to the PRA-CH family. Homodimer. Mg(2+) is required as a cofactor. Zn(2+) serves as cofactor.

The protein resides in the cytoplasm. The catalysed reaction is 1-(5-phospho-beta-D-ribosyl)-5'-AMP + H2O = 1-(5-phospho-beta-D-ribosyl)-5-[(5-phospho-beta-D-ribosylamino)methylideneamino]imidazole-4-carboxamide. It functions in the pathway amino-acid biosynthesis; L-histidine biosynthesis; L-histidine from 5-phospho-alpha-D-ribose 1-diphosphate: step 3/9. Functionally, catalyzes the hydrolysis of the adenine ring of phosphoribosyl-AMP. The polypeptide is Phosphoribosyl-AMP cyclohydrolase (Clavibacter sepedonicus (Clavibacter michiganensis subsp. sepedonicus)).